The chain runs to 207 residues: CASP-like protein F16 (207 aa).

Residues 1 to 30 (MEKSEKGNGVAPATRSPMALMGSSRNENQE) are disordered. The Cytoplasmic portion of the chain corresponds to 1 to 37 (MEKSEKGNGVAPATRSPMALMGSSRNENQEVNTSMRT). A helical membrane pass occupies residues 38–58 (AETMLRLVPMALGVAALVVML). Over 59–79 (KNSQSNDFGSVSYSDLGAFRY) the chain is Extracellular. The chain crosses the membrane as a helical span at residues 80 to 100 (LVHANGICAGYSLLSAIIAAV). The Cytoplasmic segment spans residues 101-108 (PSPSTMPR). Residues 109–129 (AWTFFLLDQILTYVILGAAAV) form a helical membrane-spanning segment. Residues 130–159 (STEVLYLANKGDSAITWSAACGTFAGFCHK) lie on the Extracellular side of the membrane. Residues 160–180 (ATIAVVITFVAVICYAVLSLV) form a helical membrane-spanning segment. Residues 181–207 (SSYRLFTKFDAPVNYPSKTIEATVFHG) lie on the Cytoplasmic side of the membrane.

It belongs to the Casparian strip membrane proteins (CASP) family. Homodimer and heterodimers.

The protein resides in the cell membrane. This is CASP-like protein F16 (F16) from Gossypium hirsutum (Upland cotton).